Consider the following 70-residue polypeptide: DNA-directed RNA polymerase subunit omega (70 aa).

Belongs to the RNA polymerase subunit omega family. The RNAP catalytic core consists of 2 alpha, 1 beta, 1 beta' and 1 omega subunit. When a sigma factor is associated with the core the holoenzyme is formed, which can initiate transcription.

It catalyses the reaction RNA(n) + a ribonucleoside 5'-triphosphate = RNA(n+1) + diphosphate. Its function is as follows. Promotes RNA polymerase assembly. Latches the N- and C-terminal regions of the beta' subunit thereby facilitating its interaction with the beta and alpha subunits. This chain is DNA-directed RNA polymerase subunit omega, found in Thermoanaerobacter pseudethanolicus (strain ATCC 33223 / 39E) (Clostridium thermohydrosulfuricum).